The sequence spans 179 residues: Inosine/xanthosine triphosphatase (179 aa).

Glu71 serves as a coordination point for Mg(2+). Residue 71–72 (EA) participates in substrate binding.

The protein belongs to the YjjX NTPase family. As to quaternary structure, homodimer. Requires Mg(2+) as cofactor. It depends on Mn(2+) as a cofactor.

It catalyses the reaction XTP + H2O = XDP + phosphate + H(+). The catalysed reaction is ITP + H2O = IDP + phosphate + H(+). In terms of biological role, phosphatase that hydrolyzes non-canonical purine nucleotides such as XTP and ITP to their respective diphosphate derivatives. Probably excludes non-canonical purines from DNA/RNA precursor pool, thus preventing their incorporation into DNA/RNA and avoiding chromosomal lesions. In Shewanella sp. (strain ANA-3), this protein is Inosine/xanthosine triphosphatase.